The primary structure comprises 62 residues: Photosystem II reaction center protein Z (62 aa).

2 consecutive transmembrane segments (helical) span residues 8–28 and 41–61; these read AVFA…VVFA and FSGT…NSLI.

This sequence belongs to the PsbZ family. As to quaternary structure, PSII is composed of 1 copy each of membrane proteins PsbA, PsbB, PsbC, PsbD, PsbE, PsbF, PsbH, PsbI, PsbJ, PsbK, PsbL, PsbM, PsbT, PsbY, PsbZ, Psb30/Ycf12, at least 3 peripheral proteins of the oxygen-evolving complex and a large number of cofactors. It forms dimeric complexes.

It localises to the plastid. The protein localises to the chloroplast thylakoid membrane. Its function is as follows. May control the interaction of photosystem II (PSII) cores with the light-harvesting antenna, regulates electron flow through the 2 photosystem reaction centers. PSII is a light-driven water plastoquinone oxidoreductase, using light energy to abstract electrons from H(2)O, generating a proton gradient subsequently used for ATP formation. This Morus indica (Mulberry) protein is Photosystem II reaction center protein Z.